We begin with the raw amino-acid sequence, 124 residues long: Small ribosomal subunit protein uS12 (124 aa).

D89 is subject to 3-methylthioaspartic acid. The interval 104–124 (ALGVEDRKRGRSKYGAKRPKA) is disordered. Residues 112–124 (RGRSKYGAKRPKA) are compositionally biased toward basic residues.

This sequence belongs to the universal ribosomal protein uS12 family. As to quaternary structure, part of the 30S ribosomal subunit. Contacts proteins S8 and S17. May interact with IF1 in the 30S initiation complex.

Functionally, with S4 and S5 plays an important role in translational accuracy. Its function is as follows. Interacts with and stabilizes bases of the 16S rRNA that are involved in tRNA selection in the A site and with the mRNA backbone. Located at the interface of the 30S and 50S subunits, it traverses the body of the 30S subunit contacting proteins on the other side and probably holding the rRNA structure together. The combined cluster of proteins S8, S12 and S17 appears to hold together the shoulder and platform of the 30S subunit. The chain is Small ribosomal subunit protein uS12 from Treponema denticola (strain ATCC 35405 / DSM 14222 / CIP 103919 / JCM 8153 / KCTC 15104).